A 203-amino-acid polypeptide reads, in one-letter code: MTPPMCSNSFFNHSSSIDHDSLPTKIVAGSSVSSFFCFLLEDSSSSSSSASSDLRFLSLDSSFSLSLSEDEDEDESELEDSFDSSFLVSSFSSSSSSSEEESEEEEEESLDSSFLVSASLSLSEDDEEEDSESEDEDEDEDSDSDSDSDSDSDEDEDEDEDSEEEEETALAFSSLACLEALTSFLLPFTLVVLAILFYPAWVE.

2 disordered regions span residues 65–84 and 92–170; these read LSLS…SFDS and SSSS…ETAL. Composition is skewed to acidic residues over residues 68–82 and 98–110; these read SEDE…EDSF and SEEE…EESL. Residues 111–122 show a composition bias toward low complexity; that stretch reads DSSFLVSASLSL. The span at 123–168 shows a compositional bias: acidic residues; the sequence is SEDDEEEDSESEDEDEDEDSDSDSDSDSDSDEDEDEDEDSEEEEET. Residues 182 to 202 traverse the membrane as a helical segment; it reads TSFLLPFTLVVLAILFYPAWV.

It is found in the membrane. This is an uncharacterized protein from Saccharomyces cerevisiae (strain ATCC 204508 / S288c) (Baker's yeast).